The primary structure comprises 103 residues: Secreted Ly-6/uPAR-related protein 1 (103 aa).

The first 22 residues, 1–22 (MASRWAVQLLLVAAWSMGCGEA), serve as a signal peptide directing secretion. The 50-residue stretch at 24–73 (KCYTCKEPMTSASCRTITRCKPEDTACMTTLVTVEAEYPFNQSPVVTRSC) folds into the UPAR/Ly6 domain. Cystine bridges form between C25–C50, C28–C37, C43–C73, C77–C93, and C94–C99.

Homodimer. Interacts with PLAU. Interacts with CHRNA7. Granulocytes. Expressed in skin. Predominantly expressed in the granular layer of skin, notably the acrosyringium. Identified in several biological fluids such as sweat, saliva, tears, plasma and urine.

Its subcellular location is the secreted. Its function is as follows. Has an antitumor activity. Was found to be a marker of late differentiation of the skin. Implicated in maintaining the physiological and structural integrity of the keratinocyte layers of the skin. In vitro down-regulates keratinocyte proliferation; the function may involve the proposed role as modulator of nicotinic acetylcholine receptors (nAChRs) activity. In vitro inhibits alpha-7-dependent nAChR currents in an allosteric manner. In T cells may be involved in regulation of intracellular Ca(2+) signaling. Seems to have an immunomodulatory function in the cornea. The function may implicate a possible role as a scavenger receptor for PLAU thereby blocking PLAU-dependent functions of PLAUR such as in cell migration and proliferation. This chain is Secreted Ly-6/uPAR-related protein 1 (SLURP1), found in Homo sapiens (Human).